A 336-amino-acid polypeptide reads, in one-letter code: Retinol dehydrogenase 10-B (336 aa).

The helical; Signal-anchor transmembrane segment at 7–27 (LFVVTFKIIWSFVLAGAKWFI) threads the bilayer. NADP(+) is bound at residue 40–64 (VITGAGSGLGRLFALEFARRRATLV). Residue Ser-192 participates in substrate binding. Tyr-205 functions as the Proton acceptor in the catalytic mechanism.

This sequence belongs to the short-chain dehydrogenases/reductases (SDR) family.

It localises to the microsome membrane. The protein resides in the endoplasmic reticulum membrane. The catalysed reaction is all-trans-retinol + NADP(+) = all-trans-retinal + NADPH + H(+). The protein operates within cofactor metabolism; retinol metabolism. Functionally, retinol dehydrogenase with a clear preference for NADP. Converts all-trans-retinol to all-trans-retinal. Has no detectable activity towards 11-cis-retinol, 9-cis-retinol and 13-cis-retinol. The protein is Retinol dehydrogenase 10-B (rdh10b) of Danio rerio (Zebrafish).